We begin with the raw amino-acid sequence, 191 residues long: MSETLNQIKESFIEYLLFQYRFKSRIAVWVLNYIKVNEAKLANIHFVDTKINHHETLEIAEVGSHASAIQFTKRNIKLMNTNEIFDYIANHNCAFDIQIHFANVSKREQRLDDLIVAQLTESPSYQTYLHDLNSMAIDRHKHALLIDYLLHNIDLSLQMNEKQRFYQLTQILNTLKLVNKHNQFEDLADDD.

It belongs to the UPF0302 family.

The sequence is that of UPF0302 protein SA1295 from Staphylococcus aureus (strain N315).